We begin with the raw amino-acid sequence, 362 residues long: Peptide chain release factor 1 (362 aa).

Gln237 is modified (N5-methylglutamine).

It belongs to the prokaryotic/mitochondrial release factor family. In terms of processing, methylated by PrmC. Methylation increases the termination efficiency of RF1.

It is found in the cytoplasm. Its function is as follows. Peptide chain release factor 1 directs the termination of translation in response to the peptide chain termination codons UAG and UAA. The chain is Peptide chain release factor 1 from Legionella pneumophila (strain Corby).